The primary structure comprises 313 residues: Olfactory receptor 1M1 (313 aa).

The Extracellular segment spans residues 1–25 (MEPQNHTSASEFILLGLSEKPDHDP). N-linked (GlcNAc...) asparagine glycosylation is present at Asn5. A helical membrane pass occupies residues 26 to 46 (VLFSLFLCMYMITVVGNLLII). Over 47 to 54 (LAISFDSH) the chain is Cytoplasmic. The chain crosses the membrane as a helical span at residues 55–75 (LHTPMYFFLANLSLVDFCLAT). The Extracellular portion of the chain corresponds to 76-97 (NTVPKMLVNIQTRNKSISYPCC). A glycan (N-linked (GlcNAc...) asparagine) is linked at Asn89. Cys97 and Cys179 are joined by a disulfide. Residues 98-118 (LTQMYFFHFFGIMDSVLIAVM) form a helical membrane-spanning segment. Over 119–142 (AYDRFVAICHPLHYSTIMSPRLCG) the chain is Cytoplasmic. Residues 143–163 (LLVGVPWVYSCFISLTHILLM) traverse the membrane as a helical segment. Topologically, residues 164–196 (ARLVFCGKNELPHYFCDLTPLLRLSCTDTTVNK) are extracellular. Residues 197–217 (IFVLIVAGMVIATPFVCILAS) form a helical membrane-spanning segment. The Cytoplasmic segment spans residues 218 to 244 (YARIIVAIMKVPSAGGRKKAFSTCSSH). The chain crosses the membrane as a helical span at residues 245 to 265 (LSVVALFYGTTIGVYLCPSSV). Residues 266 to 274 (RTAVKEKAS) lie on the Extracellular side of the membrane. The helical transmembrane segment at 275-292 (AVMYTAVTPMLNPFIYSL) threads the bilayer. At 293–313 (RNRDLKGALKKIINRKISTSS) the chain is on the cytoplasmic side.

It belongs to the G-protein coupled receptor 1 family. Expressed in testis.

The protein resides in the cell membrane. Its function is as follows. Odorant receptor. This Mus musculus (Mouse) protein is Olfactory receptor 1M1.